Here is a 332-residue protein sequence, read N- to C-terminus: Adenosine deaminase (332 aa).

Zn(2+) contacts are provided by His-12 and His-14. Positions 14, 16, and 170 each coordinate substrate. His-197 lines the Zn(2+) pocket. The Proton donor role is filled by Glu-200. Asp-278 serves as a coordination point for Zn(2+).

Belongs to the metallo-dependent hydrolases superfamily. Adenosine and AMP deaminases family. Adenosine deaminase subfamily. It depends on Zn(2+) as a cofactor.

It carries out the reaction adenosine + H2O + H(+) = inosine + NH4(+). It catalyses the reaction 2'-deoxyadenosine + H2O + H(+) = 2'-deoxyinosine + NH4(+). Catalyzes the hydrolytic deamination of adenosine and 2-deoxyadenosine. The protein is Adenosine deaminase of Clostridium perfringens (strain ATCC 13124 / DSM 756 / JCM 1290 / NCIMB 6125 / NCTC 8237 / Type A).